The primary structure comprises 293 residues: Ribosomal protein L11 methyltransferase (293 aa).

4 residues coordinate S-adenosyl-L-methionine: threonine 145, glycine 166, aspartate 188, and asparagine 230.

Belongs to the methyltransferase superfamily. PrmA family.

The protein localises to the cytoplasm. The catalysed reaction is L-lysyl-[protein] + 3 S-adenosyl-L-methionine = N(6),N(6),N(6)-trimethyl-L-lysyl-[protein] + 3 S-adenosyl-L-homocysteine + 3 H(+). Its function is as follows. Methylates ribosomal protein L11. The sequence is that of Ribosomal protein L11 methyltransferase from Escherichia coli (strain SMS-3-5 / SECEC).